Here is a 352-residue protein sequence, read N- to C-terminus: Putative F-box protein At5g14160 (352 aa).

Residues 14 to 60 enclose the F-box domain; sequence GVDWSELPEDVIRLVLRRLRLSDFHRARAVCSTWCRVWGDCVSKPNQ.

The sequence is that of Putative F-box protein At5g14160 from Arabidopsis thaliana (Mouse-ear cress).